The chain runs to 235 residues: Sugar fermentation stimulation protein homolog (235 aa).

The protein belongs to the SfsA family.

The protein is Sugar fermentation stimulation protein homolog of Azotobacter vinelandii (strain DJ / ATCC BAA-1303).